Consider the following 513-residue polypeptide: 2,3-bisphosphoglycerate-independent phosphoglycerate mutase (513 aa).

Positions 12 and 62 each coordinate Mn(2+). Residue S62 is the Phosphoserine intermediate of the active site. Substrate is bound by residues H123, R153 to D154, R185, R191, R260 to R263, and K333. 5 residues coordinate Mn(2+): D400, H404, D441, H442, and H460.

This sequence belongs to the BPG-independent phosphoglycerate mutase family. Monomer. Requires Mn(2+) as cofactor.

It catalyses the reaction (2R)-2-phosphoglycerate = (2R)-3-phosphoglycerate. Its pathway is carbohydrate degradation; glycolysis; pyruvate from D-glyceraldehyde 3-phosphate: step 3/5. Its function is as follows. Catalyzes the interconversion of 2-phosphoglycerate and 3-phosphoglycerate. The sequence is that of 2,3-bisphosphoglycerate-independent phosphoglycerate mutase from Clostridium tetani (strain Massachusetts / E88).